The primary structure comprises 87 residues: Small ribosomal subunit protein bS20 (87 aa).

A disordered region spans residues 1–26; the sequence is MANIKSAKKRAVQSEKRRKHNASRRS.

Belongs to the bacterial ribosomal protein bS20 family.

Its function is as follows. Binds directly to 16S ribosomal RNA. The protein is Small ribosomal subunit protein bS20 of Yersinia enterocolitica serotype O:8 / biotype 1B (strain NCTC 13174 / 8081).